A 107-amino-acid chain; its full sequence is Iron-sulfur cluster assembly protein CyaY (107 aa).

Belongs to the frataxin family.

Functionally, involved in iron-sulfur (Fe-S) cluster assembly. May act as a regulator of Fe-S biogenesis. The polypeptide is Iron-sulfur cluster assembly protein CyaY (Yersinia intermedia).